The following is a 235-amino-acid chain: Segregation and condensation protein A (235 aa).

This sequence belongs to the ScpA family. Component of a cohesin-like complex composed of ScpA, ScpB and the Smc homodimer, in which ScpA and ScpB bind to the head domain of Smc. The presence of the three proteins is required for the association of the complex with DNA.

It localises to the cytoplasm. In terms of biological role, participates in chromosomal partition during cell division. May act via the formation of a condensin-like complex containing Smc and ScpB that pull DNA away from mid-cell into both cell halves. In Streptococcus equi subsp. zooepidemicus (strain MGCS10565), this protein is Segregation and condensation protein A.